A 256-amino-acid polypeptide reads, in one-letter code: Omega-amidase YafV (256 aa).

Residues 4–234 (LKLTLLQQPL…AAQLDAELSL (231 aa)) enclose the CN hydrolase domain. The Proton acceptor role is filled by Glu-42. Lys-107 is an active-site residue. Cys-141 acts as the Nucleophile in catalysis.

This sequence belongs to the carbon-nitrogen hydrolase superfamily. NIT1/NIT2 family.

The enzyme catalyses a monoamide of a dicarboxylate + H2O = a dicarboxylate + NH4(+). Functionally, hydrolyzes alpha-ketoglutaramate (a-KGM) to alpha-ketoglutarate (alpha-KG) and ammonia (specific activity 21 umol/min/mg), has very weak activity on L-glutamine, and no activity on deaminated glutathione (dGSH) or glutathione. May function as a metabolite repair enzyme. This is Omega-amidase YafV from Yersinia enterocolitica.